Consider the following 802-residue polypeptide: Leucine--tRNA ligase (802 aa).

Positions 40-51 match the 'HIGH' region motif; that stretch reads PYPSGAGLHVGH. A 'KMSKS' region motif is present at residues 576–580; it reads KMSKS. Lys579 lines the ATP pocket.

It belongs to the class-I aminoacyl-tRNA synthetase family.

The protein resides in the cytoplasm. It catalyses the reaction tRNA(Leu) + L-leucine + ATP = L-leucyl-tRNA(Leu) + AMP + diphosphate. The chain is Leucine--tRNA ligase from Bacillus cereus (strain ATCC 14579 / DSM 31 / CCUG 7414 / JCM 2152 / NBRC 15305 / NCIMB 9373 / NCTC 2599 / NRRL B-3711).